The primary structure comprises 709 residues: Mucin-20 (709 aa).

A signal peptide spans methionine 1–alanine 25. Residues threonine 57 to serine 69 are compositionally biased toward polar residues. 2 disordered regions span residues threonine 57–threonine 92 and lysine 170–glycine 403. The span at alanine 78–threonine 92 shows a compositional bias: basic and acidic residues. Composition is skewed to low complexity over residues serine 173–serine 182, serine 190–serine 199, serine 209–serine 218, serine 228–serine 237, serine 247–serine 256, serine 266–serine 275, serine 285–serine 294, serine 304–serine 313, serine 323–serine 332, serine 342–serine 351, serine 361–serine 370, and serine 380–serine 389. Repeat copies occupy residues serine 173 to alanine 192, serine 193 to alanine 211, serine 212 to alanine 230, serine 231 to alanine 249, serine 250 to alanine 268, serine 269 to alanine 287, serine 288 to alanine 306, serine 307 to alanine 325, serine 326 to alanine 344, serine 345 to alanine 363, and serine 364 to alanine 382. Residues serine 173 to tryptophan 400 are 12 X 20 AA approximate tandem repeats of S-S-E-S-S-A-S-S-D-S-P-H-P-V-I-T-P-S-R-A. The stretch at serine 383–tryptophan 400 is one 12; approximate repeat. The N-linked (GlcNAc...) asparagine glycan is linked to asparagine 423. Disordered stretches follow at residues serine 434–alanine 515 and asparagine 583–glycine 657. The interval valine 450 to alanine 656 is involved in oligomerization. The segment covering valine 474 to serine 489 has biased composition (polar residues). The span at threonine 613–threonine 652 shows a compositional bias: low complexity. Residues asparagine 616 and asparagine 622 are each glycosylated (N-linked (GlcNAc...) asparagine). Residues glycine 657 to glycine 709 are interaction with MET.

Interacts with MET; oligomerization increases affinity for MET. In terms of tissue distribution, highly expressed in kidney, moderately in placenta, lung, prostate, liver, and digestive system. In the kidney, localized in the proximal tubules but not in the glomerulus or distal tubules. Detected in most of the male urogenital tract epithelia, with the exception of epididymis.

The protein localises to the secreted. Its subcellular location is the apical cell membrane. It localises to the basolateral cell membrane. It is found in the cell projection. The protein resides in the microvillus membrane. Its function is as follows. May regulate MET signaling cascade. Seems to decrease hepatocyte growth factor (HGF)-induced transient MAPK activation. Blocks GRB2 recruitment to MET thus suppressing the GRB2-RAS pathway. Inhibits HGF-induced proliferation of MMP1 and MMP9 expression. The sequence is that of Mucin-20 (MUC20) from Homo sapiens (Human).